The primary structure comprises 1386 residues: YLP motif-containing protein 1 (1386 aa).

Disordered stretches follow at residues 1-336 (MYPN…EDAR) and 517-1068 (TSIP…PPGR). Over residues 14 to 27 (YPPPPVPPPPPPVA) the composition is skewed to pro residues. Composition is skewed to low complexity over residues 31–50 (ASPG…SSSG) and 59–80 (LAQL…LQPH). Composition is skewed to pro residues over residues 81-93 (HLPP…PPVM), 102-114 (QPPP…PPGP), 148-158 (PESPPVPPGSY), 166-176 (MPPPQPPPSYY), and 184-203 (YLPP…PPSI). A compositionally biased stretch (polar residues) spans 237–259 (STMTPQEQQQYWYRQHLLSLQQR). Residues 260–270 (TKVHLPGHKKG) show a composition bias toward basic residues. A compositionally biased stretch (basic and acidic residues) spans 276–285 (DVPEPIKEEA). Over residues 302–317 (PPLPPPNEEAPPPLSP) the composition is skewed to pro residues. Residues 320–333 (PQSEDSEDSEDSEE) show a composition bias toward acidic residues. Pro residues-rich tracts occupy residues 517–558 (TSIP…PPPA), 566–603 (PVLP…PQGM), and 641–650 (PPSPYHPPPQ). The span at 651–667 (SEQVNSKPLNKVFSSEQ) shows a compositional bias: polar residues. Lysine 683 carries the N6-methyllysine modification. Over residues 706–722 (RGPREQKEQLQKLKDFG) the composition is skewed to basic and acidic residues. A compositionally biased stretch (pro residues) spans 746–761 (MYPPPGSYRPPPPMGK). Low complexity predominate over residues 762-779 (PPGSIVRPSAPPARSSIP). Composition is skewed to pro residues over residues 781–803 (TRPP…PPPV) and 848–878 (PVLP…PPPV). Residue lysine 894 forms a Glycyl lysine isopeptide (Lys-Gly) (interchain with G-Cter in SUMO2) linkage. Basic and acidic residues-rich tracts occupy residues 904–938 (ITLR…EPYF), 945–1014 (TDHR…DRPP), 1023–1033 (GERRTYPEERM), and 1049–1068 (RVEK…PPGR). Lysine 951 participates in a covalent cross-link: Glycyl lysine isopeptide (Lys-Gly) (interchain with G-Cter in SUMO2). The tract at residues 1336–1343 (KKRVRWAD) is involved in interaction with PPP1CA.

In terms of assembly, interacts with PPP1CA and NCOA5. Forms a complex with ILF2, ILF3, KHDRBS1, RBMX, NCOA5 and PPP1CA.

The protein localises to the nucleus. It localises to the nucleus speckle. Plays a role in the reduction of telomerase activity during differentiation of embryonic stem cells by binding to the core promoter of TERT and controlling its down-regulation. The protein is YLP motif-containing protein 1 (Ylpm1) of Mus musculus (Mouse).